A 295-amino-acid chain; its full sequence is Acetyl-coenzyme A carboxylase carboxyl transferase subunit beta (295 aa).

A disordered region spans residues 1–20 (MSWLSKLMPSGIRTENTPAK). Residues 28 to 295 (LWEKCSNCGS…QPHPQDADAA (268 aa)) enclose the CoA carboxyltransferase N-terminal domain. 4 residues coordinate Zn(2+): C32, C35, C51, and C54. The C4-type zinc finger occupies 32–54 (CSNCGSALYGPELEENLEVCPKC).

It belongs to the AccD/PCCB family. Acetyl-CoA carboxylase is a heterohexamer composed of biotin carboxyl carrier protein (AccB), biotin carboxylase (AccC) and two subunits each of ACCase subunit alpha (AccA) and ACCase subunit beta (AccD). It depends on Zn(2+) as a cofactor.

The protein resides in the cytoplasm. It carries out the reaction N(6)-carboxybiotinyl-L-lysyl-[protein] + acetyl-CoA = N(6)-biotinyl-L-lysyl-[protein] + malonyl-CoA. Its pathway is lipid metabolism; malonyl-CoA biosynthesis; malonyl-CoA from acetyl-CoA: step 1/1. Its function is as follows. Component of the acetyl coenzyme A carboxylase (ACC) complex. Biotin carboxylase (BC) catalyzes the carboxylation of biotin on its carrier protein (BCCP) and then the CO(2) group is transferred by the transcarboxylase to acetyl-CoA to form malonyl-CoA. The sequence is that of Acetyl-coenzyme A carboxylase carboxyl transferase subunit beta from Xanthomonas euvesicatoria pv. vesicatoria (strain 85-10) (Xanthomonas campestris pv. vesicatoria).